The sequence spans 412 residues: Serine hydroxymethyltransferase (412 aa).

(6S)-5,6,7,8-tetrahydrofolate is bound by residues L117 and 121–123; that span reads GHL. K226 carries the N6-(pyridoxal phosphate)lysine modification. (6S)-5,6,7,8-tetrahydrofolate is bound at residue 349–351; that stretch reads SPF.

The protein belongs to the SHMT family. As to quaternary structure, homodimer. Requires pyridoxal 5'-phosphate as cofactor.

It localises to the cytoplasm. It catalyses the reaction (6R)-5,10-methylene-5,6,7,8-tetrahydrofolate + glycine + H2O = (6S)-5,6,7,8-tetrahydrofolate + L-serine. The protein operates within one-carbon metabolism; tetrahydrofolate interconversion. Its pathway is amino-acid biosynthesis; glycine biosynthesis; glycine from L-serine: step 1/1. In terms of biological role, catalyzes the reversible interconversion of serine and glycine with tetrahydrofolate (THF) serving as the one-carbon carrier. This reaction serves as the major source of one-carbon groups required for the biosynthesis of purines, thymidylate, methionine, and other important biomolecules. Also exhibits THF-independent aldolase activity toward beta-hydroxyamino acids, producing glycine and aldehydes, via a retro-aldol mechanism. The chain is Serine hydroxymethyltransferase from Nitratidesulfovibrio vulgaris (strain ATCC 29579 / DSM 644 / CCUG 34227 / NCIMB 8303 / VKM B-1760 / Hildenborough) (Desulfovibrio vulgaris).